The sequence spans 259 residues: 1,2-dihydroxy-1,2-dihydronaphthalene dehydrogenase (259 aa).

Residue 8–32 (SITGAGSGIGLELVRSFKSAGYYVS) coordinates NAD(+). Residue S140 participates in substrate binding. Y153 functions as the Proton acceptor in the catalytic mechanism.

Belongs to the short-chain dehydrogenases/reductases (SDR) family.

The catalysed reaction is (1R,2S)-1,2-dihydronaphthalene-1,2-diol + NAD(+) = naphthalene-1,2-diol + NADH + H(+). The enzyme catalyses cis-1,2-dihydroxy-1,2-dihydrodibenzothiophene + NAD(+) = 1,2-dihydroxydibenzothiophene + NADH + H(+). It functions in the pathway aromatic compound metabolism; naphthalene degradation. Catalyzes the oxidation of naphthalene dihydrodiol into 1,2-dihydroxynaphthalene. The sequence is that of 1,2-dihydroxy-1,2-dihydronaphthalene dehydrogenase (nahB) from Pseudomonas putida (Arthrobacter siderocapsulatus).